A 156-amino-acid chain; its full sequence is Ribosomal RNA large subunit methyltransferase H (156 aa).

S-adenosyl-L-methionine-binding positions include Leu72, Gly103, and 122 to 127; that span reads LSSLTL.

This sequence belongs to the RNA methyltransferase RlmH family. In terms of assembly, homodimer.

It is found in the cytoplasm. The enzyme catalyses pseudouridine(1915) in 23S rRNA + S-adenosyl-L-methionine = N(3)-methylpseudouridine(1915) in 23S rRNA + S-adenosyl-L-homocysteine + H(+). Its function is as follows. Specifically methylates the pseudouridine at position 1915 (m3Psi1915) in 23S rRNA. The sequence is that of Ribosomal RNA large subunit methyltransferase H from Dechloromonas aromatica (strain RCB).